Here is an 87-residue protein sequence, read N- to C-terminus: MANVSALLTIALLLCSTLMCTARPEPAISISITTAADPCNMEKKIEGKLDDMHMVDENCGADDEDCLMRRTLVAHTDYIYTQKKKHP.

The N-terminal stretch at 1-22 (MANVSALLTIALLLCSTLMCTA) is a signal peptide. The propeptide occupies 23–77 (RPEPAISISITTAADPCNMEKKIEGKLDDMHMVDENCGADDEDCLMRRTLVAHTD). Tyr78 and Tyr80 each carry sulfotyrosine. The propeptide occupies 83–87 (KKKHP).

The protein belongs to the phytosulfokine family. Post-translationally, sulfation is important for activity and for the binding to a putative membrane receptor. PSK-beta is an enzymatic derivative of PSK-alpha. As to expression, expressed in stems, roots and leaves.

Its subcellular location is the secreted. Its function is as follows. Promotes plant cell differentiation, organogenesis and somatic embryogenesis as well as cell proliferation. The sequence is that of Phytosulfokines 2 (PSK2) from Arabidopsis thaliana (Mouse-ear cress).